Here is a 114-residue protein sequence, read N- to C-terminus: Large ribosomal subunit protein bL19 (114 aa).

Belongs to the bacterial ribosomal protein bL19 family.

In terms of biological role, this protein is located at the 30S-50S ribosomal subunit interface and may play a role in the structure and function of the aminoacyl-tRNA binding site. This is Large ribosomal subunit protein bL19 from Thermoanaerobacter sp. (strain X514).